Here is a 647-residue protein sequence, read N- to C-terminus: Protein cueball (647 aa).

The signal sequence occupies residues 1-22 (MLWCPSVLVPLIAVAACLPVLA). Over 23–534 (IGTPLEWEFA…CMTPSPWTSN (512 aa)) the chain is Extracellular. N-linked (GlcNAc...) asparagine glycosylation is found at Asn80 and Asn106. LDL-receptor class B repeat units lie at residues 119-166 (RNLF…DVCR), 167-211 (RKLY…DQLS), and 212-257 (DRIF…TNDA). Residue Asn175 is glycosylated (N-linked (GlcNAc...) asparagine). Asn316 carries N-linked (GlcNAc...) asparagine glycosylation. EGF-like domains lie at 365–401 (DEKTAQLERDHCLNGGTYIADRVLCICPTGFKGSRCE) and 436–473 (EISKCSGLCLNGGHCKLEDISEKPSCECPHNFAGERCE). 5 cysteine pairs are disulfide-bonded: Cys376-Cys389, Cys391-Cys400, Cys440-Cys450, Cys444-Cys461, and Cys463-Cys472. The N-linked (GlcNAc...) asparagine glycan is linked to Asn475. A helical membrane pass occupies residues 535–555 (VIIVLVLGIVSCFFLVAVIVH). The Cytoplasmic segment spans residues 556–647 (GFRRLYKPKR…LIHNMDDDLY (92 aa)).

Belongs to the cueball family.

It is found in the cell membrane. Functionally, has a role in spermatogenesis and oogenesis. The chain is Protein cueball from Drosophila pseudoobscura pseudoobscura (Fruit fly).